A 439-amino-acid chain; its full sequence is Protein translocase subunit SecY (439 aa).

10 helical membrane passes run 19-39 (ILFTIFILFVFRLGAHITVPG), 68-88 (YSLFAMGVSPYITASIIVQLL), 116-136 (YITLVLAMAQSIGITAGFQAM), 151-171 (LMIGAILTTGSMVVTWMGEQI), 176-196 (FGSGVSVIIFAGIVSSIPSAV), 216-236 (WLFVIGLVLSAIIIIYVTTFV), 269-289 (VIPVIFAGSITTAPATILQFL), 312-332 (WTGMLFYALLIVLFTFFYSFV), 373-393 (VGALFLGLISIIPIAAQNVWG), and 396-416 (KIVALGGTSLLILIQVAIQAV).

The protein belongs to the SecY/SEC61-alpha family. Component of the Sec protein translocase complex. Heterotrimer consisting of SecY, SecE and SecG subunits. The heterotrimers can form oligomers, although 1 heterotrimer is thought to be able to translocate proteins. Interacts with the ribosome. Interacts with SecDF, and other proteins may be involved. Interacts with SecA.

The protein localises to the cell membrane. Functionally, the central subunit of the protein translocation channel SecYEG. Consists of two halves formed by TMs 1-5 and 6-10. These two domains form a lateral gate at the front which open onto the bilayer between TMs 2 and 7, and are clamped together by SecE at the back. The channel is closed by both a pore ring composed of hydrophobic SecY resides and a short helix (helix 2A) on the extracellular side of the membrane which forms a plug. The plug probably moves laterally to allow the channel to open. The ring and the pore may move independently. The polypeptide is Protein translocase subunit SecY (Lactococcus lactis subsp. lactis (strain IL1403) (Streptococcus lactis)).